The chain runs to 245 residues: Uridylate kinase (245 aa).

Residue 13 to 16 coordinates ATP; sequence KLSG. G56 provides a ligand contact to UMP. Positions 57 and 61 each coordinate ATP. Residues D76 and 138–145 contribute to the UMP site; that span reads TGRPFFTT. ATP contacts are provided by N166, Y172, and D175.

The protein belongs to the UMP kinase family. Homohexamer.

The protein localises to the cytoplasm. It carries out the reaction UMP + ATP = UDP + ADP. The protein operates within pyrimidine metabolism; CTP biosynthesis via de novo pathway; UDP from UMP (UMPK route): step 1/1. With respect to regulation, inhibited by UTP. In terms of biological role, catalyzes the reversible phosphorylation of UMP to UDP. The chain is Uridylate kinase from Mycoplasma mobile (strain ATCC 43663 / 163K / NCTC 11711) (Mesomycoplasma mobile).